The sequence spans 157 residues: MRIGHGFDVHAFGGEGPLIIGGVRIPYEKGLLAHSDGDVALHALTDALLGAAALGDIGKLFPDTDEAYKGADSRELLREALRQIAQKGYRVGNVDVTIIAQAPKMLPHAPQMRINIAEDLGIHMDEVNVKATTTEKLGFTGRGEGIACEAVALLIKA.

A divalent metal cation is bound by residues D8 and H10. Residues 8-10 (DVH) and 34-35 (HS) each bind 4-CDP-2-C-methyl-D-erythritol 2-phosphate. An a divalent metal cation-binding site is contributed by H42. 4-CDP-2-C-methyl-D-erythritol 2-phosphate contacts are provided by residues 56 to 58 (DIG), 61 to 65 (FPDTD), 100 to 106 (AQAPKML), 132 to 135 (TTTE), F139, and R142.

It belongs to the IspF family. As to quaternary structure, homotrimer. A divalent metal cation is required as a cofactor.

The enzyme catalyses 4-CDP-2-C-methyl-D-erythritol 2-phosphate = 2-C-methyl-D-erythritol 2,4-cyclic diphosphate + CMP. It participates in isoprenoid biosynthesis; isopentenyl diphosphate biosynthesis via DXP pathway; isopentenyl diphosphate from 1-deoxy-D-xylulose 5-phosphate: step 4/6. In terms of biological role, involved in the biosynthesis of isopentenyl diphosphate (IPP) and dimethylallyl diphosphate (DMAPP), two major building blocks of isoprenoid compounds. Catalyzes the conversion of 4-diphosphocytidyl-2-C-methyl-D-erythritol 2-phosphate (CDP-ME2P) to 2-C-methyl-D-erythritol 2,4-cyclodiphosphate (ME-CPP) with a corresponding release of cytidine 5-monophosphate (CMP). The polypeptide is 2-C-methyl-D-erythritol 2,4-cyclodiphosphate synthase (Erwinia tasmaniensis (strain DSM 17950 / CFBP 7177 / CIP 109463 / NCPPB 4357 / Et1/99)).